The primary structure comprises 501 residues: Lysine--tRNA ligase (501 aa).

Mg(2+) is bound by residues E412 and E419.

The protein belongs to the class-II aminoacyl-tRNA synthetase family. Homodimer. Requires Mg(2+) as cofactor.

It is found in the cytoplasm. It catalyses the reaction tRNA(Lys) + L-lysine + ATP = L-lysyl-tRNA(Lys) + AMP + diphosphate. In Dechloromonas aromatica (strain RCB), this protein is Lysine--tRNA ligase.